The primary structure comprises 349 residues: Protein MULTIPLE CHLOROPLAST DIVISION SITE 1 (349 aa).

Residues Met1–Val52 constitute a chloroplast transit peptide. Residues Cys53 to Val116 are Chloroplast intermembrane-facing. A helical transmembrane segment spans residues Asn117–Val139. Over Arg140–Ser349 the chain is Stromal. The segment at Gln315–Ser349 is disordered. Positions Ile329–Ser343 are enriched in polar residues.

Interacts with MIND1. Interacts with ARC6 in the chloroplast stroma and binds to FtsZ2-1 in an ARC6-dependent manner.

It is found in the plastid. It localises to the chloroplast inner membrane. Required for chloroplast division. Together with MIND1 and ARC3, regulates FtsZ ring positioning in chloroplasts in an ARC6-dependent manner. Determines the site of chloroplast division in concert with MIND1. Not directly involved in ring formation, but required for MIND1 and MINE1 localization to regulate FtsZ ring formation during plastidial constriction. The polypeptide is Protein MULTIPLE CHLOROPLAST DIVISION SITE 1 (Arabidopsis thaliana (Mouse-ear cress)).